A 359-amino-acid polypeptide reads, in one-letter code: GTP 3',8-cyclase (359 aa).

In terms of domain architecture, Radical SAM core spans 33 to 260 (RFGRRHDSLR…PTGRENPSAP (228 aa)). Arginine 42 lines the GTP pocket. Residues cysteine 49 and cysteine 53 each contribute to the [4Fe-4S] cluster site. Tyrosine 55 lines the S-adenosyl-L-methionine pocket. Position 56 (cysteine 56) interacts with [4Fe-4S] cluster. Arginine 93 contacts GTP. Glycine 97 serves as a coordination point for S-adenosyl-L-methionine. Threonine 124 provides a ligand contact to GTP. Serine 148 provides a ligand contact to S-adenosyl-L-methionine. Residue lysine 185 coordinates GTP. An S-adenosyl-L-methionine-binding site is contributed by methionine 219. Cysteine 286 and cysteine 289 together coordinate [4Fe-4S] cluster. Residue 291–293 (RLR) coordinates GTP. Cysteine 303 serves as a coordination point for [4Fe-4S] cluster.

Belongs to the radical SAM superfamily. MoaA family. In terms of assembly, monomer and homodimer. [4Fe-4S] cluster is required as a cofactor.

The catalysed reaction is GTP + AH2 + S-adenosyl-L-methionine = (8S)-3',8-cyclo-7,8-dihydroguanosine 5'-triphosphate + 5'-deoxyadenosine + L-methionine + A + H(+). It participates in cofactor biosynthesis; molybdopterin biosynthesis. In terms of biological role, catalyzes the cyclization of GTP to (8S)-3',8-cyclo-7,8-dihydroguanosine 5'-triphosphate. The protein is GTP 3',8-cyclase of Rhodopirellula baltica (strain DSM 10527 / NCIMB 13988 / SH1).